A 117-amino-acid chain; its full sequence is Protein Rev (117 aa).

Ser5 and Ser8 each carry phosphoserine; by host CK2. A homomultimerization region spans residues 18-26 (LIKILYQSN). Residues 24–49 (QSNPPPNTEGTTRQARRNRRRRWRAR) are disordered. A Nuclear localization signal and RNA-binding (RRE) motif is present at residues 35-51 (TRQARRNRRRRWRARQR). The span at 37–49 (QARRNRRRRWRAR) shows a compositional bias: basic residues. The Nuclear export signal and binding to XPO1 signature appears at 74–85 (LQLPPLERLTLN). Ser93 and Ser100 each carry phosphoserine; by host. Residues 93–105 (SGTQGVGSPQISV) show a composition bias toward polar residues. A disordered region spans residues 93-117 (SGTQGVGSPQISVESPAILGSGTEE).

Belongs to the HIV-1 REV protein family. Homomultimer; when bound to the RRE. Multimeric assembly is essential for activity and may involve XPO1. Binds to human KPNB1, XPO1, TNPO1, RANBP5 and IPO7. Interacts with the viral Integrase. Interacts with human KHDRBS1. Interacts with human NAP1; this interaction decreases Rev multimerization and stimulates its activity. Interacts with human DEAD-box helicases DDX3 and DDX24; these interactions may serve for viral RNA export to the cytoplasm and packaging, respectively. Interacts with human PSIP1; this interaction may inhibit HIV-1 DNA integration by promoting dissociation of the Integrase-LEDGF/p75 complex. Asymmetrically arginine dimethylated at one site by host PRMT6. Methylation impairs the RNA-binding activity and export of viral RNA from the nucleus to the cytoplasm. In terms of processing, phosphorylated by protein kinase CK2. Presence of, and maybe binding to the N-terminus of the regulatory beta subunit of CK2 is necessary for CK2-mediated Rev's phosphorylation.

Its subcellular location is the host nucleus. It localises to the host nucleolus. The protein localises to the host cytoplasm. In terms of biological role, escorts unspliced or incompletely spliced viral pre-mRNAs (late transcripts) out of the nucleus of infected cells. These pre-mRNAs carry a recognition sequence called Rev responsive element (RRE) located in the env gene, that is not present in fully spliced viral mRNAs (early transcripts). This function is essential since most viral proteins are translated from unspliced or partially spliced pre-mRNAs which cannot exit the nucleus by the pathway used by fully processed cellular mRNAs. Rev itself is translated from a fully spliced mRNA that readily exits the nucleus. Rev's nuclear localization signal (NLS) binds directly to KPNB1/Importin beta-1 without previous binding to KPNA1/Importin alpha-1. KPNB1 binds to the GDP bound form of RAN (Ran-GDP) and targets Rev to the nucleus. In the nucleus, the conversion from Ran-GDP to Ran-GTP dissociates Rev from KPNB1 and allows Rev's binding to the RRE in viral pre-mRNAs. Rev multimerization on the RRE via cooperative assembly exposes its nuclear export signal (NES) to the surface. Rev can then form a complex with XPO1/CRM1 and Ran-GTP, leading to nuclear export of the complex. Conversion from Ran-GTP to Ran-GDP mediates dissociation of the Rev/RRE/XPO1/RAN complex, so that Rev can return to the nucleus for a subsequent round of export. Beside KPNB1, also seems to interact with TNPO1/Transportin-1, RANBP5/IPO5 and IPO7/RANBP7 for nuclear import. The nucleoporin-like HRB/RIP is an essential cofactor that probably indirectly interacts with Rev to release HIV RNAs from the perinuclear region to the cytoplasm. The chain is Protein Rev from Human immunodeficiency virus type 1 group M subtype A (isolate MAL) (HIV-1).